Consider the following 267-residue polypeptide: MAASTMALSSSTFAGKAVKLSPSSSEISGNGRITMRKTAAKPKPASSGSPWXXXXXXXXXXXXXXXXXXXXXXXXXXXXXXXXXXXXXXXXXXXXXXXXXXXXXXXXXXXXXXXXXXXXXXXXXXXXXXXXXXXXXXXXXXXXXXXXXXXXSLVHAQSILAIWACQVVLMGAVEGYRIAGGPLGEVVDPLYPGGSFDPLGLAEDPEAFAELKVKEIKNGRLAMFSMFGFFVQAIVTGKGPLENLADHIADPVNNNAWAFATNFVPGK.

The transit peptide at 1 to 34 directs the protein to the chloroplast; that stretch reads MAASTMALSSSTFAGKAVKLSPSSSEISGNGRIT. Positions 19–52 are disordered; the sequence is KLSPSSSEISGNGRITMRKTAAKPKPASSGSPWX. Residues 153-173 traverse the membrane as a helical segment; the sequence is LVHAQSILAIWACQVVLMGAV. Chlorophyll b contacts are provided by valine 154, serine 158, glutamine 166, glutamate 174, arginine 177, and leucine 183. Chlorophyll a is bound by residues lysine 214, glutamate 215, asparagine 218, arginine 220, glutamine 232, histidine 247, and alanine 256. Residues 221-241 traverse the membrane as a helical segment; the sequence is LAMFSMFGFFVQAIVTGKGPL. Phenylalanine 263 contacts chlorophyll b.

This sequence belongs to the light-harvesting chlorophyll a/b-binding (LHC) protein family. As to quaternary structure, the LHC complex consists of chlorophyll a-b binding proteins. It depends on Binds at least 14 chlorophylls (8 Chl-a and 6 Chl-b) and carotenoids such as lutein and neoxanthin. as a cofactor. Photoregulated by reversible phosphorylation of its threonine residues.

It localises to the plastid. The protein localises to the chloroplast thylakoid membrane. Its function is as follows. The light-harvesting complex (LHC) functions as a light receptor, it captures and delivers excitation energy to photosystems with which it is closely associated. The polypeptide is Chlorophyll a-b binding protein 3B, chloroplastic (CAB3B) (Solanum lycopersicum (Tomato)).